Here is a 403-residue protein sequence, read N- to C-terminus: Phosphoglycerate kinase (403 aa).

Substrate-binding positions include 22–24 (DFN), arginine 37, 60–63 (HFGR), arginine 119, and arginine 152. Residues lysine 202, glutamate 324, and 354–357 (GGDT) each bind ATP.

Belongs to the phosphoglycerate kinase family. As to quaternary structure, monomer.

It is found in the cytoplasm. The enzyme catalyses (2R)-3-phosphoglycerate + ATP = (2R)-3-phospho-glyceroyl phosphate + ADP. It functions in the pathway carbohydrate degradation; glycolysis; pyruvate from D-glyceraldehyde 3-phosphate: step 2/5. The polypeptide is Phosphoglycerate kinase (Maricaulis maris (strain MCS10) (Caulobacter maris)).